The primary structure comprises 557 residues: Laccase-11 (557 aa).

The N-terminal stretch at Met1 to Ala23 is a signal peptide. Plastocyanin-like domains are found at residues Asp31–Gly147 and Glu158–Val308. N-linked (GlcNAc...) asparagine glycans are attached at residues Asn36, Asn69, and Asn77. His81 and His83 together coordinate Cu cation. Asn115 is a glycosylation site (N-linked (GlcNAc...) asparagine). Residues His126 and His128 each coordinate Cu cation. N-linked (GlcNAc...) asparagine glycosylation is found at Asn240, Asn296, Asn323, Asn371, Asn381, Asn398, Asn416, and Asn440. The region spanning Asp406–Glu541 is the Plastocyanin-like 3 domain. The Cu cation site is built by His458, His461, His463, His520, Cys521, His522, and His526.

It belongs to the multicopper oxidase family. Cu cation is required as a cofactor. As to expression, ubiquitous and constitutive.

It localises to the secreted. The protein resides in the extracellular space. The protein localises to the apoplast. It catalyses the reaction 4 hydroquinone + O2 = 4 benzosemiquinone + 2 H2O. In terms of biological role, lignin degradation and detoxification of lignin-derived products. This Arabidopsis thaliana (Mouse-ear cress) protein is Laccase-11 (LAC11).